Consider the following 209-residue polypeptide: Octanoyltransferase (209 aa).

Positions 30–209 (DNEPEIVYLV…IQTEFNKIFK (180 aa)) constitute a BPL/LPL catalytic domain. Substrate contacts are provided by residues 69–76 (RGGKFTFH), 143–145 (AIG), and 156–158 (GIA). Cysteine 174 (acyl-thioester intermediate) is an active-site residue.

Belongs to the LipB family.

Its subcellular location is the cytoplasm. It carries out the reaction octanoyl-[ACP] + L-lysyl-[protein] = N(6)-octanoyl-L-lysyl-[protein] + holo-[ACP] + H(+). The protein operates within protein modification; protein lipoylation via endogenous pathway; protein N(6)-(lipoyl)lysine from octanoyl-[acyl-carrier-protein]: step 1/2. Functionally, catalyzes the transfer of endogenously produced octanoic acid from octanoyl-acyl-carrier-protein onto the lipoyl domains of lipoate-dependent enzymes. Lipoyl-ACP can also act as a substrate although octanoyl-ACP is likely to be the physiological substrate. This chain is Octanoyltransferase, found in Rickettsia prowazekii (strain Madrid E).